Consider the following 175-residue polypeptide: Pre-mRNA-splicing factor SNT309 (175 aa).

In terms of assembly, belongs to the NTC complex (or PRP19-associated complex), composed of at least CEF1, CLF1, ISY1, NTC20, SNT309, SYF1, SYF2, and PRP19. The NTC complex associates with the spliceosome after the release of the U1 and U4 snRNAs and forms the CWC spliceosome subcomplex (or CEF1-associated complex) reminiscent of a late-stage spliceosome composed also of the U2, U5 and U6 snRNAs and at least BUD13, BUD31, BRR2, CDC40, CUS1, CWC2, CWC15, CWC21, CWC22, CWC23, CWC24, CWC25, CWC27, ECM2, HSH155, IST3, LEA1, MSL1, PRP8, PRP9, PRP11, PRP21, PRP22, PRP45, PRP46, SLU7, SMB1, SMD1, SMD2, SMD3, SMX2, SMX3, SNU114, SPP2, RSE1 and YJU2. Interacts with PRP19.

It is found in the nucleus. Involved in pre-mRNA splicing by stabilizing the NTC (or PRP19-associated complex). As a component of the NTC complex, associates to the spliceosome to mediate conformational rearrangement or to stabilize the structure of the spliceosome after U4 snRNA dissociation, which leads to spliceosome maturation. The chain is Pre-mRNA-splicing factor SNT309 (SNT309) from Saccharomyces cerevisiae (strain ATCC 204508 / S288c) (Baker's yeast).